A 340-amino-acid chain; its full sequence is Adenosine kinase (340 aa).

D293 is a catalytic residue.

Belongs to the carbohydrate kinase PfkB family. It depends on Mg(2+) as a cofactor.

It catalyses the reaction adenosine + ATP = AMP + ADP + H(+). Its pathway is purine metabolism; AMP biosynthesis via salvage pathway; AMP from adenosine: step 1/1. ATP dependent phosphorylation of adenosine and other related nucleoside analogs to monophosphate derivatives. ADO1 does not play a major role in adenine utilization in yeast. Its physiological role could primarily be to recycle adenosine produced by the methyl cycle. The chain is Adenosine kinase from Saccharomyces cerevisiae (strain ATCC 204508 / S288c) (Baker's yeast).